We begin with the raw amino-acid sequence, 138 residues long: Translation initiation factor 2 subunit beta (138 aa).

It belongs to the eIF-2-beta/eIF-5 family. As to quaternary structure, heterotrimer composed of an alpha, a beta and a gamma chain.

Its function is as follows. eIF-2 functions in the early steps of protein synthesis by forming a ternary complex with GTP and initiator tRNA. The chain is Translation initiation factor 2 subunit beta from Methanopyrus kandleri (strain AV19 / DSM 6324 / JCM 9639 / NBRC 100938).